A 305-amino-acid polypeptide reads, in one-letter code: GMP synthase [glutamine-hydrolyzing] subunit B (305 aa).

Positions 2 to 184 constitute a GMPS ATP-PPase domain; sequence VKPEKFIPKA…LKLPDEICER (183 aa). ATP is bound at residue 29–35; the sequence is SGGVDSS.

As to quaternary structure, heterodimer composed of a glutamine amidotransferase subunit (A) and a GMP-binding subunit (B).

It carries out the reaction XMP + L-glutamine + ATP + H2O = GMP + L-glutamate + AMP + diphosphate + 2 H(+). It participates in purine metabolism; GMP biosynthesis; GMP from XMP (L-Gln route): step 1/1. Catalyzes the synthesis of GMP from XMP. This chain is GMP synthase [glutamine-hydrolyzing] subunit B, found in Methanosarcina barkeri (strain Fusaro / DSM 804).